The following is a 118-amino-acid chain: Protein Rev (118 aa).

2 positions are modified to phosphoserine; by host CK2: Ser-5 and Ser-8. A homomultimerization region spans residues 18–28 (LIKFLYQSSSD). The tract at residues 23–52 (YQSSSDPPPNPGGTRQARRNRRRRWRERQR) is disordered. A Nuclear localization signal and RNA-binding (RRE) motif is present at residues 36 to 52 (TRQARRNRRRRWRERQR). Residues 38–49 (QARRNRRRRWRE) are compositionally biased toward basic residues. Positions 75–86 (LQLPPLERLTLD) match the Nuclear export signal and binding to XPO1 motif. The disordered stretch occupies residues 92–118 (GTSGTQGVGSPQILVESPTVLESGTKE). 2 positions are modified to phosphoserine; by host: Ser-94 and Ser-101.

The protein belongs to the HIV-1 REV protein family. In terms of assembly, homomultimer; when bound to the RRE. Multimeric assembly is essential for activity and may involve XPO1. Binds to human KPNB1, XPO1, TNPO1, RANBP5 and IPO7. Interacts with the viral Integrase. Interacts with human KHDRBS1. Interacts with human NAP1; this interaction decreases Rev multimerization and stimulates its activity. Interacts with human DEAD-box helicases DDX3 and DDX24; these interactions may serve for viral RNA export to the cytoplasm and packaging, respectively. Interacts with human PSIP1; this interaction may inhibit HIV-1 DNA integration by promoting dissociation of the Integrase-LEDGF/p75 complex. Asymmetrically arginine dimethylated at one site by host PRMT6. Methylation impairs the RNA-binding activity and export of viral RNA from the nucleus to the cytoplasm. Post-translationally, phosphorylated by protein kinase CK2. Presence of, and maybe binding to the N-terminus of the regulatory beta subunit of CK2 is necessary for CK2-mediated Rev's phosphorylation.

The protein resides in the host nucleus. It is found in the host nucleolus. Its subcellular location is the host cytoplasm. Functionally, escorts unspliced or incompletely spliced viral pre-mRNAs (late transcripts) out of the nucleus of infected cells. These pre-mRNAs carry a recognition sequence called Rev responsive element (RRE) located in the env gene, that is not present in fully spliced viral mRNAs (early transcripts). This function is essential since most viral proteins are translated from unspliced or partially spliced pre-mRNAs which cannot exit the nucleus by the pathway used by fully processed cellular mRNAs. Rev itself is translated from a fully spliced mRNA that readily exits the nucleus. Rev's nuclear localization signal (NLS) binds directly to KPNB1/Importin beta-1 without previous binding to KPNA1/Importin alpha-1. KPNB1 binds to the GDP bound form of RAN (Ran-GDP) and targets Rev to the nucleus. In the nucleus, the conversion from Ran-GDP to Ran-GTP dissociates Rev from KPNB1 and allows Rev's binding to the RRE in viral pre-mRNAs. Rev multimerization on the RRE via cooperative assembly exposes its nuclear export signal (NES) to the surface. Rev can then form a complex with XPO1/CRM1 and Ran-GTP, leading to nuclear export of the complex. Conversion from Ran-GTP to Ran-GDP mediates dissociation of the Rev/RRE/XPO1/RAN complex, so that Rev can return to the nucleus for a subsequent round of export. Beside KPNB1, also seems to interact with TNPO1/Transportin-1, RANBP5/IPO5 and IPO7/RANBP7 for nuclear import. The nucleoporin-like HRB/RIP is an essential cofactor that probably indirectly interacts with Rev to release HIV RNAs from the perinuclear region to the cytoplasm. The polypeptide is Protein Rev (Human immunodeficiency virus type 1 group M subtype B (isolate LW123) (HIV-1)).